A 477-amino-acid chain; its full sequence is tRNA(Ile)-lysidine synthase (477 aa).

36–41 (SGGADS) is an ATP binding site.

It belongs to the tRNA(Ile)-lysidine synthase family.

The protein resides in the cytoplasm. The catalysed reaction is cytidine(34) in tRNA(Ile2) + L-lysine + ATP = lysidine(34) in tRNA(Ile2) + AMP + diphosphate + H(+). Functionally, ligates lysine onto the cytidine present at position 34 of the AUA codon-specific tRNA(Ile) that contains the anticodon CAU, in an ATP-dependent manner. Cytidine is converted to lysidine, thus changing the amino acid specificity of the tRNA from methionine to isoleucine. This Treponema pallidum (strain Nichols) protein is tRNA(Ile)-lysidine synthase.